The sequence spans 142 residues: Baculoviral IAP repeat-containing protein 5 (142 aa).

One copy of the BIR repeat lies at 18 to 88 (RVSTFKNWPF…KHSSGCAFLS (71 aa)). Serine 20 is subject to Phosphoserine; by AURKC. Lysine 23 carries the N6-acetyllysine modification. Position 34 is a phosphothreonine; by CDK1 and CDK15 (threonine 34). Threonine 48 carries the phosphothreonine; by CK2; in vitro modification. Zn(2+)-binding residues include cysteine 57, cysteine 60, histidine 77, and cysteine 84. Residues lysine 90, lysine 110, lysine 112, and lysine 115 each carry the N6-acetyllysine modification. Residue threonine 117 is modified to Phosphothreonine; by AURKB.

It belongs to the IAP family. As to quaternary structure, monomer or homodimer. Exists as a homodimer in the apo state and as a monomer in the CPC-bound state. The monomer protects cells against apoptosis more efficiently than the dimer. Only the dimeric form is capable of enhancing tubulin stability in cells. When phosphorylated, interacts with LAMTOR5/HBXIP; the resulting complex binds pro-CASP9, as well as active CASP9, but much less efficiently. Component of the chromosomal passenger complex (CPC) composed of at least BIRC5/survivin, CDCA8/borealin, INCENP, AURKB or AURKC; in the complex forms a triple-helix bundle-based subcomplex with INCENP and CDCA8. Interacts with JTB. Interacts (via BIR domain) with histone H3 phosphorylated at 'Thr-3' (H3pT3). Interacts with EVI5. Interacts with GTP-bound RAN in both the S and M phases of the cell cycle. Interacts with USP9X. Interacts with tubulin. Interacts with BIRC2/c-IAP1. The monomeric form interacts with XIAP/BIRC4. Both the dimeric and monomeric form can interact with DIABLO/SMAC. Interacts with BIRC6/bruce. Interacts with FBXL7; this interaction facilitates the polyubiquitination and subsequent proteasomal degradation of BIRC5 by the SCF(FBXL7) E3 ubiquitin-protein ligase complex. Post-translationally, ubiquitinated by the Cul9-RING ubiquitin-protein ligase complex, leading to its degradation. Ubiquitination is required for centrosomal targeting. Deubiquitinated by USP35 or USP38; leading to stabilization. In terms of processing, in vitro phosphorylation at Thr-117 by AURKB prevents interaction with INCENP and localization to mitotic chromosomes. Phosphorylation at Thr-48 by CK2 is critical for its mitotic and anti-apoptotic activities. Phosphorylation at Thr-34 by CDK15 is critical for its anti-apoptotic activity. Phosphorylation at Ser-20 by AURKC is critical for regulation of proper chromosome alignment and segregation, and possibly cytokinesis. Expressed in spleen, lung, brain, heart, kidney and intestine (at protein level). Expressed in cochlea including the organ of Corti, the lateral wall, the interdental cells of the Limbus as well as in cells of the cochlear nerve and the spiral ganglions (at protein level). Also expressed in Schwann cells (at protein level). Not expressed in cells of the inner and outer sulcus or the Reissner's membrane (at protein level).

The protein resides in the cytoplasm. It is found in the nucleus. The protein localises to the chromosome. It localises to the centromere. Its subcellular location is the cytoskeleton. The protein resides in the spindle. It is found in the kinetochore. The protein localises to the midbody. In terms of biological role, multitasking protein that has dual roles in promoting cell proliferation and preventing apoptosis. Component of a chromosome passage protein complex (CPC) which is essential for chromosome alignment and segregation during mitosis and cytokinesis. Acts as an important regulator of the localization of this complex; directs CPC movement to different locations from the inner centromere during prometaphase to midbody during cytokinesis and participates in the organization of the center spindle by associating with polymerized microtubules. Involved in the recruitment of CPC to centromeres during early mitosis via association with histone H3 phosphorylated at 'Thr-3' (H3pT3) during mitosis. The complex with RAN plays a role in mitotic spindle formation by serving as a physical scaffold to help deliver the RAN effector molecule TPX2 to microtubules. May counteract a default induction of apoptosis in G2/M phase. The acetylated form represses STAT3 transactivation of target gene promoters. May play a role in neoplasia. Inhibitor of CASP3 and CASP7. Essential for the maintenance of mitochondrial integrity and function. The polypeptide is Baculoviral IAP repeat-containing protein 5 (Cavia porcellus (Guinea pig)).